Here is a 622-residue protein sequence, read N- to C-terminus: Cilia- and flagella-associated protein 206 (622 aa).

The disordered stretch occupies residues 570-592 (SQVYPPKDTSTQSMREDSTGVPR).

Belongs to the CFAP206 family.

The protein localises to the cytoplasm. It is found in the cytoskeleton. The protein resides in the cilium axoneme. It localises to the cilium basal body. Its function is as follows. Essential for sperm motility and is involved in the regulation of the beating frequency of motile cilia on the epithelial cells of the respiratory tract. Required for the establishment of radial spokes in sperm flagella. The sequence is that of Cilia- and flagella-associated protein 206 from Homo sapiens (Human).